A 446-amino-acid chain; its full sequence is uncharacterized protein (446 aa).

The segment at 141–282 (TEAETNGTRP…GPKPKVKRVS (142 aa)) is disordered. Positions 159 to 170 (NSGSKPKAGTQS) are enriched in polar residues. A compositionally biased stretch (basic and acidic residues) spans 194-210 (IKSERRSISQGGEKDKA). 4 positions are modified to phosphoserine: Ser200, Ser202, Ser212, and Ser214. 2 stretches are compositionally biased toward low complexity: residues 211–221 (SSSSPSSSQQS) and 229–239 (SPSQQNSRSSS). Ser251 bears the Phosphoserine mark. Residues 269-280 (GKSRGPKPKVKR) show a composition bias toward basic residues. Phosphoserine is present on residues Ser282 and Ser307.

This is an uncharacterized protein from Drosophila melanogaster (Fruit fly).